The primary structure comprises 336 residues: Probable G-protein coupled receptor 160 (336 aa).

Over 1-21 (MTALPSKNCSFQYQSHQAPRS) the chain is Extracellular. Asparagine 8 carries N-linked (GlcNAc...) asparagine glycosylation. A helical transmembrane segment spans residues 22–42 (LDATCLLLLIILGKVLLNVLI). The Cytoplasmic segment spans residues 43-56 (LRVKRKDTSWSFME). The helical transmembrane segment at 57 to 77 (YFCFSLALVDLLLLVNISVLT) threads the bilayer. At 78–95 (YFRDFVVLGIRFTNYHIC) the chain is on the extracellular side. A helical transmembrane segment spans residues 96 to 116 (LLTQIVSFAYGFLHYPVCSLA). Residues 117 to 136 (CIDYWCNLSRATKPSSRWQK) lie on the Cytoplasmic side of the membrane. Residues 137-157 (LLYLLTVILTWISVLAYVLGD) form a helical membrane-spanning segment. Over 158–187 (PAISASLKTHKTSVNQCPSYVSTQSHWLSL) the chain is Extracellular. A helical membrane pass occupies residues 188–208 (SMLMILSVAFLISWQEVVALI). Topologically, residues 209–243 (QAIRIASYKNKAVLYFPFPPHTSYTVSPRAVLLPR) are cytoplasmic. Residues 244–264 (LIVCFLGTWFPFVALQVLILS) form a helical membrane-spanning segment. Residues 265 to 272 (LRVQIPAY) are Extracellular-facing. A helical membrane pass occupies residues 273–293 (IEMNVPWLYFVNSFLIAAVYW). Topologically, residues 294 to 336 (FNCHKLYWRDGMFPVDPFINWKCCFVPVHRLKQVERPMSIIIC) are cytoplasmic.

It belongs to the G-protein coupled receptor 1 family.

It is found in the cell membrane. Orphan receptor. This chain is Probable G-protein coupled receptor 160 (Gpr160), found in Rattus norvegicus (Rat).